Reading from the N-terminus, the 202-residue chain is Kunitz trypsin inhibitor 7 (202 aa).

The first 25 residues, 1 to 25 (MKTFRSMLISLLLVAITTTSGVVEG), serve as a signal peptide directing secretion. A disulfide bridge links cysteine 69 with cysteine 115. Asparagine 93, asparagine 136, asparagine 144, and asparagine 198 each carry an N-linked (GlcNAc...) asparagine glycan.

The protein belongs to the protease inhibitor I3 (leguminous Kunitz-type inhibitor) family.

Exhibits Kunitz trypsin protease inhibitor activity. The protein is Kunitz trypsin inhibitor 7 of Arabidopsis thaliana (Mouse-ear cress).